The sequence spans 277 residues: Probable endonuclease 4 (277 aa).

Residues His-69, His-109, Glu-145, Asp-179, His-182, His-214, Asp-227, His-229, and Glu-259 each contribute to the Zn(2+) site.

It belongs to the AP endonuclease 2 family. It depends on Zn(2+) as a cofactor.

The catalysed reaction is Endonucleolytic cleavage to 5'-phosphooligonucleotide end-products.. In terms of biological role, endonuclease IV plays a role in DNA repair. It cleaves phosphodiester bonds at apurinic or apyrimidinic (AP) sites, generating a 3'-hydroxyl group and a 5'-terminal sugar phosphate. The polypeptide is Probable endonuclease 4 (Bacteroides thetaiotaomicron (strain ATCC 29148 / DSM 2079 / JCM 5827 / CCUG 10774 / NCTC 10582 / VPI-5482 / E50)).